A 483-amino-acid polypeptide reads, in one-letter code: Endoplasmic reticulum lectin 1 (483 aa).

Positions 1 to 33 (MEEGDGGLRSLVPGGPLLLVLYGLLEASGGGRA) are cleaved as a signal peptide. MRH domains lie at 111–246 (SSCS…LCSH) and 342–469 (SYCF…ICKI). The cysteines at positions 113 and 126 are disulfide-linked. Residue Asn-195 is glycosylated (N-linked (GlcNAc...) asparagine). Disulfide bonds link Cys-199–Cys-232, Cys-215–Cys-244, Cys-344–Cys-357, Cys-421–Cys-455, and Cys-436–Cys-467.

May form a complex with OS9, HSPA5, SYVN1, and SEL1L with which it interacts directly. Interacts (via PRKCSH 2 domain) with KREMEN2 (when glycosylated). Interacts with HSPA5. N-glycosylated.

The protein localises to the endoplasmic reticulum lumen. Its function is as follows. Probable lectin that binds selectively to improperly folded lumenal proteins. May function in endoplasmic reticulum quality control and endoplasmic reticulum-associated degradation (ERAD) of both non-glycosylated proteins and glycoproteins. The polypeptide is Endoplasmic reticulum lectin 1 (Erlec1) (Mus musculus (Mouse)).